The following is a 1000-amino-acid chain: Chloride channel protein D (1000 aa).

2 stretches are compositionally biased toward low complexity: residues 1 to 16 and 38 to 60; these read MSSGNPFDNGNPNDGN and NNNNNNNNNNNNNNNNNNNNSSV. Residues 1–90 are disordered; the sequence is MSSGNPFDNG…SYDDDGDDEE (90 aa). Over 1-256 the chain is Cytoplasmic; it reads MSSGNPFDNG…LASDHEVLRW (256 aa). The span at 71–80 shows a compositional bias: basic and acidic residues; the sequence is RIQEEERLTE. The next 10 membrane-spanning stretches (helical) occupy residues 257 to 277, 290 to 310, 416 to 436, 442 to 462, 493 to 513, 534 to 554, 678 to 698, 710 to 730, 733 to 753, and 772 to 792; these read IVSLFMGIFIGVIAYFSHACV, AVLELDLFLAFLTYFLLNTLL, GAGAGVAAAFSAPLGGTLFSL, FWSIALTWRAFFCCMVATYTM, IIPFLLIGVLGGLGGALFTWI, LEVFLIIGLSTCIQFFLPLFF, LGLWPMFLFCIFYLFFAAYTA, MLVIGASYGRFVGLVVYHILG, VSIDPGIYAVMGAAAFMGGVS, and YLLPLMLTVMTAKWVADALIH. 2 CBS domains span residues 824–881 and 926–984; these read MAKK…ISDV and MNLT…YREL.

Belongs to the chloride channel (TC 2.A.49) family.

The protein resides in the membrane. Functionally, voltage-gated chloride channel. Chloride channels may have several functions including the regulation of cell volume, membrane potential stabilization and signal transduction. Required for normal aggregation. The polypeptide is Chloride channel protein D (clcD) (Dictyostelium discoideum (Social amoeba)).